The sequence spans 376 residues: Hydroxylysine kinase (376 aa).

Catalysis depends on Asp229, which acts as the Proton acceptor.

It belongs to the aminoglycoside phosphotransferase family.

It localises to the cytoplasm. The catalysed reaction is (5R)-5-hydroxy-L-lysine + GTP = (5R)-5-phosphooxy-L-lysine + GDP + H(+). In terms of biological role, catalyzes the GTP-dependent phosphorylation of 5-hydroxy-L-lysine. The chain is Hydroxylysine kinase (HYKK) from Bos taurus (Bovine).